We begin with the raw amino-acid sequence, 184 residues long: Large ribosomal subunit protein uL6 (184 aa).

Belongs to the universal ribosomal protein uL6 family. As to quaternary structure, part of the 50S ribosomal subunit.

Its function is as follows. This protein binds to the 23S rRNA, and is important in its secondary structure. It is located near the subunit interface in the base of the L7/L12 stalk, and near the tRNA binding site of the peptidyltransferase center. This is Large ribosomal subunit protein uL6 from Thermococcus gammatolerans (strain DSM 15229 / JCM 11827 / EJ3).